Consider the following 327-residue polypeptide: Urokinase plasminogen activator surface receptor (327 aa).

The signal sequence occupies residues 1 to 23; it reads MGLPRRLLLLLLLATTCVPASQG. UPAR/Ly6 domains lie at 24–117, 117–212, and 213–298; these read LQCM…GRYL, LECA…PPNG, and FQCY…SPTG. Disulfide bonds link C26–C47, C29–C35, and C40–C68. The N-linked (GlcNAc...) asparagine glycan is linked to N32. An N-linked (GlcNAc...) asparagine glycan is attached at N75. 11 disulfides stabilise this stretch: C94–C99, C119–C146, C122–C129, C139–C168, C174–C191, C192–C197, C215–C243, C218–C226, C236–C262, C268–C287, and C288–C293. N-linked (GlcNAc...) asparagine glycosylation is found at N183, N193, N221, N254, and N282. A lipid anchor (GPI-anchor amidated glycine) is attached at G298. A propeptide spans 299-327 (removed in mature form); the sequence is GAPRPGPAQLSLIASLLLTLGLWGVLLWT.

Monomer. Interacts (via the UPAR/Ly6 domains) with SRPX2. Interacts with MRC2. Interacts with SORL1 (via N-terminal ectodomain); this interaction decreases PLAUR internalization. The ternary complex composed of PLAUR-PLAU-SERPINE1 also interacts with SORL1. Interacts with CD82; this interaction prevents PLAUR from binding to its high affinity ligand PLAU. Expressed in angiogenic endothelial cells (at protein level).

The protein localises to the cell membrane. Its subcellular location is the secreted. In terms of biological role, acts as a receptor for urokinase plasminogen activator. Plays a role in localizing and promoting plasmin formation. Mediates the proteolysis-independent signal transduction activation effects of U-PA. The sequence is that of Urokinase plasminogen activator surface receptor (Plaur) from Mus musculus (Mouse).